The primary structure comprises 218 residues: ATP phosphoribosyltransferase (218 aa).

The protein belongs to the ATP phosphoribosyltransferase family. Short subfamily. As to quaternary structure, heteromultimer composed of HisG and HisZ subunits.

The protein localises to the cytoplasm. It carries out the reaction 1-(5-phospho-beta-D-ribosyl)-ATP + diphosphate = 5-phospho-alpha-D-ribose 1-diphosphate + ATP. The protein operates within amino-acid biosynthesis; L-histidine biosynthesis; L-histidine from 5-phospho-alpha-D-ribose 1-diphosphate: step 1/9. Its function is as follows. Catalyzes the condensation of ATP and 5-phosphoribose 1-diphosphate to form N'-(5'-phosphoribosyl)-ATP (PR-ATP). Has a crucial role in the pathway because the rate of histidine biosynthesis seems to be controlled primarily by regulation of HisG enzymatic activity. This is ATP phosphoribosyltransferase from Burkholderia thailandensis (strain ATCC 700388 / DSM 13276 / CCUG 48851 / CIP 106301 / E264).